A 213-amino-acid polypeptide reads, in one-letter code: ATP phosphoribosyltransferase (213 aa).

It belongs to the ATP phosphoribosyltransferase family. Short subfamily. In terms of assembly, heteromultimer composed of HisG and HisZ subunits.

It is found in the cytoplasm. It carries out the reaction 1-(5-phospho-beta-D-ribosyl)-ATP + diphosphate = 5-phospho-alpha-D-ribose 1-diphosphate + ATP. It participates in amino-acid biosynthesis; L-histidine biosynthesis; L-histidine from 5-phospho-alpha-D-ribose 1-diphosphate: step 1/9. Its function is as follows. Catalyzes the condensation of ATP and 5-phosphoribose 1-diphosphate to form N'-(5'-phosphoribosyl)-ATP (PR-ATP). Has a crucial role in the pathway because the rate of histidine biosynthesis seems to be controlled primarily by regulation of HisG enzymatic activity. This is ATP phosphoribosyltransferase from Chromobacterium violaceum (strain ATCC 12472 / DSM 30191 / JCM 1249 / CCUG 213 / NBRC 12614 / NCIMB 9131 / NCTC 9757 / MK).